A 405-amino-acid polypeptide reads, in one-letter code: Argininosuccinate synthase (405 aa).

12 to 20 (AYSGGLDTS) is a binding site for ATP. Residues tyrosine 90 and serine 95 each coordinate L-citrulline. Glycine 120 serves as a coordination point for ATP. Residues threonine 122, asparagine 126, and aspartate 127 each contribute to the L-aspartate site. Asparagine 126 serves as a coordination point for L-citrulline. Residues arginine 130, serine 179, serine 188, glutamate 265, and tyrosine 277 each coordinate L-citrulline.

This sequence belongs to the argininosuccinate synthase family. Type 1 subfamily. As to quaternary structure, homotetramer.

It localises to the cytoplasm. It carries out the reaction L-citrulline + L-aspartate + ATP = 2-(N(omega)-L-arginino)succinate + AMP + diphosphate + H(+). It participates in amino-acid biosynthesis; L-arginine biosynthesis; L-arginine from L-ornithine and carbamoyl phosphate: step 2/3. The chain is Argininosuccinate synthase from Clostridium perfringens (strain 13 / Type A).